The following is a 216-amino-acid chain: Protein ADP-ribose pyrophosphatase ORF38 (216 aa).

The region spanning 1–177 (MRNAAGLFMI…DYSNYIEFFD (177 aa)) is the Nudix hydrolase domain. Positions 48–70 (GHRDCCDAKVYETAVREFVEETG) match the Nudix box motif.

It localises to the host cytoplasm. Its subcellular location is the host nucleus. The catalysed reaction is ADP-D-ribose + H2O = D-ribose 5-phosphate + AMP + 2 H(+). Functionally, plays an important role in virus replication most probably through its hydrolyzing ADP-ribose activity in host cells. May function in viral DNA replication or transcription directly, or by removing toxic substances or metabolic intermediates. This chain is Protein ADP-ribose pyrophosphatase ORF38, found in Lepidoptera (butterflies and moths).